The sequence spans 70 residues: uncharacterized protein (70 aa).

Residues 4–24 traverse the membrane as a helical segment; that stretch reads VKTIAMLAMLVIVAALIYMGY.

The protein localises to the host membrane. This is an uncharacterized protein from Dryophytes versicolor (chameleon treefrog).